The primary structure comprises 323 residues: Beta-ketoacyl-[acyl-carrier-protein] synthase III (323 aa).

Catalysis depends on residues C112 and H248. Residues 249 to 253 (QANRR) are ACP-binding. Residue N278 is part of the active site.

This sequence belongs to the thiolase-like superfamily. FabH family. As to quaternary structure, homodimer.

It localises to the cytoplasm. The catalysed reaction is malonyl-[ACP] + acetyl-CoA + H(+) = 3-oxobutanoyl-[ACP] + CO2 + CoA. The protein operates within lipid metabolism; fatty acid biosynthesis. Functionally, catalyzes the condensation reaction of fatty acid synthesis by the addition to an acyl acceptor of two carbons from malonyl-ACP. Catalyzes the first condensation reaction which initiates fatty acid synthesis and may therefore play a role in governing the total rate of fatty acid production. Possesses both acetoacetyl-ACP synthase and acetyl transacylase activities. Its substrate specificity determines the biosynthesis of branched-chain and/or straight-chain of fatty acids. The polypeptide is Beta-ketoacyl-[acyl-carrier-protein] synthase III (Streptococcus agalactiae serotype Ia (strain ATCC 27591 / A909 / CDC SS700)).